We begin with the raw amino-acid sequence, 139 residues long: Actin-depolymerizing factor (139 aa).

The 135-residue stretch at 5–139 (SSGMAVDDEC…SMDIIKARAF (135 aa)) folds into the ADF-H domain.

The protein belongs to the actin-binding proteins ADF family. Preferentially in mature anther.

Its function is as follows. Actin-depolymerizing protein. Severs actin filaments (F-actin) and binds to actin monomers. This is Actin-depolymerizing factor from Lilium longiflorum (Trumpet lily).